The primary structure comprises 213 residues: High frequency lysogenization protein HflD homolog (213 aa).

A coiled-coil region spans residues 79 to 122 (QGLNAELTRYTLSLMVLERKLSSAKGALNTLGDRINGLQRQLDH).

The protein belongs to the HflD family.

The protein resides in the cytoplasm. It is found in the cell inner membrane. The protein is High frequency lysogenization protein HflD homolog of Salmonella typhi.